Here is a 254-residue protein sequence, read N- to C-terminus: MDYRTVFRLDGACAAVTGAGSGIGLEICRAFAASGARLILIDREAAALDRAAQELGAAVAARIVADVTDAEAMTAAAAEAEAVAPVSILVNSAGIARLHDALETDDATWRQVMAVNVDGMFWASRAFGRAMVARGAGAIVNLGSMSGTIVNRPQFASSYMASKGAVHQLTRALAAEWAGRGVRVNALAPGYVATEMTLKMRERPELFETWLDMTPMGRCGEPSEIAAAALFLASPAASYVTGAILAVDGGYTVW.

Residues 21-23 (SGI), D42, 66-67 (DV), Y159, K163, and 192-194 (VAT) contribute to the NAD(+) site. The active-site Proton acceptor is Y159. A Mg(2+)-binding site is contributed by W254.

Belongs to the short-chain dehydrogenases/reductases (SDR) family. In terms of assembly, homotetramer. Requires a divalent metal cation as cofactor.

The catalysed reaction is galactitol + NAD(+) = keto-L-tagatose + NADH + H(+). With respect to regulation, inhibited by the chelating agents EDTA and alpha,alpha'-dipyridyl. Inhibited by Zn(2+) and Fe(2+). Its function is as follows. Catalyzes the interconversion of galactitol to the rare sugar L-tagatose. Shows activity with a wide range of substrates, and catalyzes the oxidation of a variety of polyvalent aliphatic alcohols and polyols to the corresponding ketones and ketoses, respectively, and in the reverse reaction, it reduces ketones with high stereoselectivity yielding the corresponding S-configurated alcohols. Shows high activity with D-threitol, xylitol, 1,2-hexanediol, 1,2-pentanediol, 2-hexanol, L-erythrulose, D-ribulose and acetoin. Specific for NAD(+). This Cereibacter sphaeroides (Rhodobacter sphaeroides) protein is Galactitol 2-dehydrogenase (L-tagatose-forming).